The chain runs to 328 residues: Arabinose 5-phosphate isomerase KdsD (328 aa).

The region spanning 42-184 (CEKMFWCKGK…AVALLKARGF (143 aa)) is the SIS domain. Substrate is bound by residues 75–76 (GT), His82, His88, 114–123 (ALIPVLKRLH), 148–150 (KVA), Thr222, and Asp275. Position 82 (His82) interacts with Zn(2+). The CBS 1 domain occupies 210-268 (MHTGDEIPHVKKTASLRDALLEVTRKNLGMTVICDDNMMIEGIFTDGDLRRVFDMGVDV). The 52-residue stretch at 277-328 (MTPGGIRVRPGILAVEALNLMQSRHITSVMVADGDHLLGVLHMHDLLRAGVV) folds into the CBS 2 domain.

The protein belongs to the SIS family. GutQ/KpsF subfamily. In terms of assembly, homotetramer.

It catalyses the reaction D-arabinose 5-phosphate = D-ribulose 5-phosphate. It participates in carbohydrate biosynthesis; 3-deoxy-D-manno-octulosonate biosynthesis; 3-deoxy-D-manno-octulosonate from D-ribulose 5-phosphate: step 1/3. It functions in the pathway bacterial outer membrane biogenesis; lipopolysaccharide biosynthesis. Its function is as follows. Involved in the biosynthesis of 3-deoxy-D-manno-octulosonate (KDO), a unique 8-carbon sugar component of lipopolysaccharides (LPSs). Catalyzes the reversible aldol-ketol isomerization between D-ribulose 5-phosphate (Ru5P) and D-arabinose 5-phosphate (A5P). The polypeptide is Arabinose 5-phosphate isomerase KdsD (kdsD) (Escherichia coli O6:H1 (strain CFT073 / ATCC 700928 / UPEC)).